A 77-amino-acid polypeptide reads, in one-letter code: U14-theraphotoxin-Cg1a 1 (77 aa).

Positions 1-21 are cleaved as a signal peptide; the sequence is MKTSVLLVILGIAAITVQCTA. Residues 22 to 49 constitute a propeptide that is removed on maturation; the sequence is SESVEQDSLRTFVDAVLGWNAEMASEAR. Intrachain disulfides connect C50/C64, C57/C69, and C63/C75. K77 carries the lysine amide modification.

This sequence belongs to the neurotoxin 10 (Hwtx-1) family. 65 (Jztx-21) subfamily. In terms of tissue distribution, expressed by the venom gland.

The protein resides in the secreted. Its function is as follows. Probable ion channel inhibitor. In Chilobrachys guangxiensis (Chinese earth tiger tarantula), this protein is U14-theraphotoxin-Cg1a 1.